A 115-amino-acid chain; its full sequence is Translation initiation factor 1A 2 (115 aa).

A disordered region spans residues 1-34 (MANYRSTIRHRNSGSRKSVSGDTHEVTRVRTPQK). Residues 22–34 (DTHEVTRVRTPQK) show a composition bias toward basic and acidic residues. Residues 27–101 (TRVRTPQKDR…SKADVTWKYT (75 aa)) enclose the S1-like domain.

It belongs to the eIF-1A family.

Functionally, seems to be required for maximal rate of protein biosynthesis. Enhances ribosome dissociation into subunits and stabilizes the binding of the initiator Met-tRNA(I) to 40 S ribosomal subunits. The chain is Translation initiation factor 1A 2 from Methanosarcina barkeri (strain Fusaro / DSM 804).